The sequence spans 383 residues: 3-dehydroquinate synthase (383 aa).

Residues 81-86 (EGEVSK), 115-119 (GVVGD), 139-140 (TS), K152, and K161 each bind NAD(+). Residues E194, H256, and H274 each contribute to the Zn(2+) site.

Belongs to the sugar phosphate cyclases superfamily. Dehydroquinate synthase family. The cofactor is Co(2+). It depends on Zn(2+) as a cofactor. NAD(+) is required as a cofactor.

It localises to the cytoplasm. It carries out the reaction 7-phospho-2-dehydro-3-deoxy-D-arabino-heptonate = 3-dehydroquinate + phosphate. The protein operates within metabolic intermediate biosynthesis; chorismate biosynthesis; chorismate from D-erythrose 4-phosphate and phosphoenolpyruvate: step 2/7. In terms of biological role, catalyzes the conversion of 3-deoxy-D-arabino-heptulosonate 7-phosphate (DAHP) to dehydroquinate (DHQ). The protein is 3-dehydroquinate synthase of Nitrobacter hamburgensis (strain DSM 10229 / NCIMB 13809 / X14).